Here is a 764-residue protein sequence, read N- to C-terminus: 5-methyltetrahydropteroyltriglutamate--homocysteine methyltransferase (764 aa).

Residues 16–19 (RELK) and lysine 115 each bind 5-methyltetrahydropteroyltri-L-glutamate. Residues 435–437 (IGS) and glutamate 488 each bind L-homocysteine. L-methionine contacts are provided by residues 435 to 437 (IGS) and glutamate 488. 5-methyltetrahydropteroyltri-L-glutamate contacts are provided by residues 519–520 (RC) and tryptophan 565. Aspartate 603 provides a ligand contact to L-homocysteine. Aspartate 603 provides a ligand contact to L-methionine. Glutamate 609 serves as a coordination point for 5-methyltetrahydropteroyltri-L-glutamate. Zn(2+) contacts are provided by histidine 645, cysteine 647, and glutamate 669. The active-site Proton donor is the histidine 698. Cysteine 730 serves as a coordination point for Zn(2+).

This sequence belongs to the vitamin-B12 independent methionine synthase family. Zn(2+) is required as a cofactor.

The enzyme catalyses 5-methyltetrahydropteroyltri-L-glutamate + L-homocysteine = tetrahydropteroyltri-L-glutamate + L-methionine. It functions in the pathway amino-acid biosynthesis; L-methionine biosynthesis via de novo pathway; L-methionine from L-homocysteine (MetE route): step 1/1. Functionally, catalyzes the transfer of a methyl group from 5-methyltetrahydrofolate to homocysteine resulting in methionine formation. In Burkholderia thailandensis (strain ATCC 700388 / DSM 13276 / CCUG 48851 / CIP 106301 / E264), this protein is 5-methyltetrahydropteroyltriglutamate--homocysteine methyltransferase.